Consider the following 326-residue polypeptide: GTP 3',8-cyclase (326 aa).

The 224-residue stretch at Lys-4–Asn-227 folds into the Radical SAM core domain. Arg-13 is a binding site for GTP. [4Fe-4S] cluster contacts are provided by Cys-20 and Cys-24. Tyr-26 contributes to the S-adenosyl-L-methionine binding site. Cys-27 contributes to the [4Fe-4S] cluster binding site. Arg-63 is a binding site for GTP. Residue Gly-67 coordinates S-adenosyl-L-methionine. Thr-94 lines the GTP pocket. Position 118 (Ser-118) interacts with S-adenosyl-L-methionine. GTP is bound at residue Lys-155. Met-189 is a binding site for S-adenosyl-L-methionine. The [4Fe-4S] cluster site is built by Cys-253 and Cys-256. Position 258–260 (Arg-258–Arg-260) interacts with GTP. Cys-270 contributes to the [4Fe-4S] cluster binding site.

It belongs to the radical SAM superfamily. MoaA family. Monomer and homodimer. [4Fe-4S] cluster is required as a cofactor.

It carries out the reaction GTP + AH2 + S-adenosyl-L-methionine = (8S)-3',8-cyclo-7,8-dihydroguanosine 5'-triphosphate + 5'-deoxyadenosine + L-methionine + A + H(+). Its pathway is cofactor biosynthesis; molybdopterin biosynthesis. In terms of biological role, catalyzes the cyclization of GTP to (8S)-3',8-cyclo-7,8-dihydroguanosine 5'-triphosphate. In Syntrophomonas wolfei subsp. wolfei (strain DSM 2245B / Goettingen), this protein is GTP 3',8-cyclase.